The sequence spans 744 residues: C-type polyheme cytochrome OmcB (744 aa).

Residues 1 to 23 (MSRKVTKYSAVLAVSLFAAALAG) form the signal peptide. Residue Cys24 is the site of N-palmitoyl cysteine attachment. Cys24 carries S-diacylglycerol cysteine lipidation. Residues Cys48, Cys51, His52, Cys81, Cys84, His85, Cys107, Cys110, His111, Cys141, Cys144, His145, Cys185, Cys188, His189, Cys225, Cys228, His229, Cys303, Cys306, His307, Cys382, Cys385, His386, Cys430, Cys433, His434, Cys480, Cys483, His484, Cys555, Cys558, His559, Cys587, Cys590, and His591 each contribute to the heme c site.

Binds 12 heme c groups per subunit.

The protein localises to the cell outer membrane. Its function is as follows. Involved in anaerobic respiration with Fe(3+) as terminal electron acceptor. Acts as an electron-transport mediator in the dissimilatory reduction of Fe(3+). The chain is C-type polyheme cytochrome OmcB (omcB) from Geobacter sulfurreducens (strain DL-1 / KN400).